Here is a 343-residue protein sequence, read N- to C-terminus: Polyprenal reductase 2 (343 aa).

6 helical membrane passes run 12–32 (GAWITVWIVSILPLVIASIPT), 66–86 (FAHFYVIGVVWTTLLLAATWM), 164–184 (MHILGYFAGLFFYVTAPLSLC), 223–243 (PLMKLGSLQWIGGAIFLWGWI), 266–286 (IIPYGDWFGMVSSPHFLAEIV), and 291–311 (LLIASGGTDITIWLLFGFVAA).

This sequence belongs to the steroid 5-alpha reductase family. Polyprenal reductase subfamily. As to expression, expressed in roots, leaves, stems and flowers.

It localises to the endoplasmic reticulum membrane. It carries out the reaction a di-trans,poly-cis-dolichal + NADP(+) = a di-trans,poly-cis-polyprenal + NADPH + H(+). It functions in the pathway protein modification; protein glycosylation. Functionally, plays a key role in early steps of protein N-linked glycosylation by being involved in the conversion of polyprenol into dolichol. Acts as a polyprenal reductase that mediates the reduction of polyprenal into dolichal in a NADP-dependent mechanism. Dolichols are required for the synthesis of dolichol-linked monosaccharides and the oligosaccharide precursor used for N-glycosylation. Involved in the regulation of plant growth and reproductive processes. This Arabidopsis thaliana (Mouse-ear cress) protein is Polyprenal reductase 2.